A 538-amino-acid polypeptide reads, in one-letter code: Putative cysteine ligase BshC (538 aa).

The stretch at K460–L484 forms a coiled coil.

This sequence belongs to the BshC family.

Functionally, involved in bacillithiol (BSH) biosynthesis. May catalyze the last step of the pathway, the addition of cysteine to glucosamine malate (GlcN-Mal) to generate BSH. The chain is Putative cysteine ligase BshC from Bacillus cereus (strain AH820).